The following is a 636-amino-acid chain: 1-deoxy-D-xylulose-5-phosphate synthase (636 aa).

Thiamine diphosphate contacts are provided by residues His72 and Gly113–Ala115. Mg(2+) is bound at residue Asp144. Thiamine diphosphate is bound by residues Gly145–Ser146, Asn174, Tyr287, and Glu370. A Mg(2+)-binding site is contributed by Asn174.

The protein belongs to the transketolase family. DXPS subfamily. As to quaternary structure, homodimer. Mg(2+) is required as a cofactor. The cofactor is thiamine diphosphate.

The catalysed reaction is D-glyceraldehyde 3-phosphate + pyruvate + H(+) = 1-deoxy-D-xylulose 5-phosphate + CO2. It participates in metabolic intermediate biosynthesis; 1-deoxy-D-xylulose 5-phosphate biosynthesis; 1-deoxy-D-xylulose 5-phosphate from D-glyceraldehyde 3-phosphate and pyruvate: step 1/1. Its function is as follows. Catalyzes the acyloin condensation reaction between C atoms 2 and 3 of pyruvate and glyceraldehyde 3-phosphate to yield 1-deoxy-D-xylulose-5-phosphate (DXP). The chain is 1-deoxy-D-xylulose-5-phosphate synthase from Synechococcus sp. (strain ATCC 27144 / PCC 6301 / SAUG 1402/1) (Anacystis nidulans).